The primary structure comprises 211 residues: Proteasome subunit beta 1 (211 aa).

A propeptide spans 1–17 (MVIMGNELQLENKILKG) (removed in mature form; by autocatalysis). The Nucleophile role is filled by Thr-18.

Belongs to the peptidase T1B family. In terms of assembly, the 20S proteasome core is composed of 14 alpha and 14 beta subunits that assemble into four stacked heptameric rings, resulting in a barrel-shaped structure. The two inner rings, each composed of seven catalytic beta subunits, are sandwiched by two outer rings, each composed of seven alpha subunits. The catalytic chamber with the active sites is on the inside of the barrel. Has a gated structure, the ends of the cylinder being occluded by the N-termini of the alpha-subunits. Is capped at one or both ends by the proteasome regulatory ATPase, PAN.

The protein resides in the cytoplasm. It catalyses the reaction Cleavage of peptide bonds with very broad specificity.. The formation of the proteasomal ATPase PAN-20S proteasome complex, via the docking of the C-termini of PAN into the intersubunit pockets in the alpha-rings, triggers opening of the gate for substrate entry. Interconversion between the open-gate and close-gate conformations leads to a dynamic regulation of the 20S proteasome proteolysis activity. Its function is as follows. Component of the proteasome core, a large protease complex with broad specificity involved in protein degradation. The chain is Proteasome subunit beta 1 from Saccharolobus islandicus (strain M.16.27) (Sulfolobus islandicus).